Consider the following 401-residue polypeptide: LL-diaminopimelate aminotransferase (401 aa).

Residues Tyr-15 and Gly-42 each coordinate substrate. Residues Tyr-72, 108–109, Tyr-132, Asn-176, Tyr-207, and 235–237 contribute to the pyridoxal 5'-phosphate site; these read AK and SFS. 3 residues coordinate substrate: Lys-109, Tyr-132, and Asn-176. Residue Lys-238 is modified to N6-(pyridoxal phosphate)lysine. Residues Arg-246 and Asn-281 each contribute to the pyridoxal 5'-phosphate site. The substrate site is built by Asn-281 and Arg-377.

The protein belongs to the class-I pyridoxal-phosphate-dependent aminotransferase family. LL-diaminopimelate aminotransferase subfamily. In terms of assembly, homodimer. Pyridoxal 5'-phosphate serves as cofactor.

The catalysed reaction is (2S,6S)-2,6-diaminopimelate + 2-oxoglutarate = (S)-2,3,4,5-tetrahydrodipicolinate + L-glutamate + H2O + H(+). It functions in the pathway amino-acid biosynthesis; L-lysine biosynthesis via DAP pathway; LL-2,6-diaminopimelate from (S)-tetrahydrodipicolinate (aminotransferase route): step 1/1. Its function is as follows. Involved in the synthesis of meso-diaminopimelate (m-DAP or DL-DAP), required for both lysine and peptidoglycan biosynthesis. Catalyzes the direct conversion of tetrahydrodipicolinate to LL-diaminopimelate. In Azobacteroides pseudotrichonymphae genomovar. CFP2, this protein is LL-diaminopimelate aminotransferase.